The primary structure comprises 231 residues: Large ribosomal subunit protein uL1 (231 aa).

The protein belongs to the universal ribosomal protein uL1 family. In terms of assembly, part of the 50S ribosomal subunit.

Its function is as follows. Binds directly to 23S rRNA. The L1 stalk is quite mobile in the ribosome, and is involved in E site tRNA release. Protein L1 is also a translational repressor protein, it controls the translation of the L11 operon by binding to its mRNA. This Francisella tularensis subsp. tularensis (strain WY96-3418) protein is Large ribosomal subunit protein uL1.